The following is a 149-amino-acid chain: Flagellar assembly factor FliW (149 aa).

It belongs to the FliW family. As to quaternary structure, interacts with translational regulator CsrA and flagellin(s).

It localises to the cytoplasm. In terms of biological role, acts as an anti-CsrA protein, binds CsrA and prevents it from repressing translation of its target genes, one of which is flagellin. Binds to flagellin and participates in the assembly of the flagellum. The protein is Flagellar assembly factor FliW of Thermotoga neapolitana (strain ATCC 49049 / DSM 4359 / NBRC 107923 / NS-E).